Reading from the N-terminus, the 276-residue chain is Rhomboid protease GlpG (276 aa).

A run of 6 helical transmembrane segments spans residues 94 to 114 (AGPL…LMQI), 142 to 162 (ALLH…WYLG), 168 to 188 (VLGT…SGWA), 193 to 213 (SGTY…YVWL), 229 to 249 (LMAF…GMSI), and 250 to 270 (ANAA…WDTY). Catalysis depends on S201, which acts as the Nucleophile. The active site involves H254.

It belongs to the peptidase S54 family.

It localises to the cell inner membrane. The enzyme catalyses Cleaves type-1 transmembrane domains using a catalytic dyad composed of serine and histidine that are contributed by different transmembrane domains.. Its function is as follows. Rhomboid-type serine protease that catalyzes intramembrane proteolysis. The protein is Rhomboid protease GlpG of Pectobacterium atrosepticum (strain SCRI 1043 / ATCC BAA-672) (Erwinia carotovora subsp. atroseptica).